A 515-amino-acid polypeptide reads, in one-letter code: Membrane-bound transcription factor site-2 protease (515 aa).

Topologically, residues 1 to 3 (MIP) are cytoplasmic. Residues 4 to 24 (VSLLVVVVGGWTAVYLADLVL) form a helical membrane-spanning segment. Residues 25–74 (KSSVYFKHSYEDWLENNGLSISPFHIRWQTSIFNRAFYSWGRRKARMLYQ) are Lumenal-facing. The next 2 helical transmembrane spans lie at 75–95 (WFNFGMVFGVIAMFSSFFLLG) and 96–107 (KTLMQTLAQMMA). The Lumenal portion of the chain corresponds to 108–140 (DSPSPYSSSSSSSSSSSSSSSSSSSLHNEQVLQ). Residues 141–165 (VVVPGINLPVNQLTYFFAAVLISGV) form a helical membrane-spanning segment. Residue histidine 167 participates in Zn(2+) binding. Residue glutamate 168 is part of the active site. 3 consecutive transmembrane segments (helical) span residues 170–182 (GHGIAAIREQVRF), 183–205 (NGFGIFLFIIYPGAFVDLFTTHL), and 225–247 (FVLALLGILALVLLPVILLPFYY). Histidine 171 provides a ligand contact to Zn(2+). Residues 248–442 (TGVGVLITEV…LPVIVETFVK (195 aa)) lie on the Lumenal side of the membrane. N-linked (GlcNAc...) asparagine glycosylation occurs at asparagine 333. 2 helical membrane-spanning segments follow: residues 443–460 (YLISLSGALAIVNAVPCF) and 461–472 (ALDGQWILNSFL). The Lumenal segment spans residues 473–488 (DATLTSVIGDNDVKDL). A helical transmembrane segment spans residues 489-509 (IGFFILLGGSVLLAANVTLGL). Over 510-515 (WMVTAR) the chain is Cytoplasmic.

Belongs to the peptidase M50A family. It depends on Zn(2+) as a cofactor.

The protein resides in the membrane. It is found in the cytoplasm. The protein localises to the golgi apparatus membrane. The catalysed reaction is Cleaves several transcription factors that are type-2 transmembrane proteins within membrane-spanning domains. Known substrates include sterol regulatory element-binding protein (SREBP) -1, SREBP-2 and forms of the transcriptional activator ATF6. SREBP-2 is cleaved at the site 477-DRSRILL-|-CVLTFLCLSFNPLTSLLQWGGA-505. The residues Asn-Pro, 11 residues distal to the site of cleavage in the membrane-spanning domain, are important for cleavage by S2P endopeptidase. Replacement of either of these residues does not prevent cleavage, but there is no cleavage if both of these residues are replaced.. Zinc metalloprotease that mediates intramembrane proteolysis of proteins such as ATF6, ATF6B, SREBF1/SREBP1 and SREBF2/SREBP2. Catalyzes the second step in the proteolytic activation of the sterol regulatory element-binding proteins (SREBPs) SREBF1/SREBP1 and SREBF2/SREBP2: cleaves SREBPs within the first transmembrane segment, thereby releasing the N-terminal segment with a portion of the transmembrane segment attached. Mature N-terminal SREBP fragments shuttle to the nucleus and activate gene transcription. Also mediates the second step in the proteolytic activation of the cyclic AMP-dependent transcription factor ATF-6 (ATF6 and ATF6B). Involved in intramembrane proteolysis during bone formation. In astrocytes and osteoblasts, upon DNA damage and ER stress, mediates the second step of the regulated intramembrane proteolytic activation of the transcription factor CREB3L1, leading to the inhibition of cell-cycle progression. The sequence is that of Membrane-bound transcription factor site-2 protease (Mbtps2) from Mus musculus (Mouse).